Consider the following 276-residue polypeptide: Proteasome subunit beta type-8 (276 aa).

Residues 1–72 (MALLDLCGAP…RKVQIEMAHG (72 aa)) constitute a propeptide, removed in mature form. Thr-73 functions as the Nucleophile in the catalytic mechanism.

It belongs to the peptidase T1B family. In terms of assembly, the 26S proteasome consists of a 20S proteasome core and two 19S regulatory subunits. The 20S proteasome core is composed of 28 subunits that are arranged in four stacked rings, resulting in a barrel-shaped structure. The two end rings are each formed by seven alpha subunits, and the two central rings are each formed by seven beta subunits. The catalytic chamber with the active sites is on the inside of the barrel. Component of the immunoproteasome, where it displaces the equivalent housekeeping subunit PSMB5. Component of the spermatoproteasome, a form of the proteasome specifically found in testis. Directly interacts with POMP. Interacts with TAP1. Autocleaved. The resulting N-terminal Thr residue of the mature subunit is responsible for the nucleophile proteolytic activity.

The protein localises to the cytoplasm. The protein resides in the nucleus. The enzyme catalyses Cleavage of peptide bonds with very broad specificity.. Its function is as follows. The proteasome is a multicatalytic proteinase complex which is characterized by its ability to cleave peptides with Arg, Phe, Tyr, Leu, and Glu adjacent to the leaving group at neutral or slightly basic pH. The proteasome has an ATP-dependent proteolytic activity. This subunit is involved in antigen processing to generate class I binding peptides. May participate in the generation of spliced peptides resulting from the ligation of two separate proteasomal cleavage products that are not contiguous in the parental protein. Required for adipocyte differentiation. This is Proteasome subunit beta type-8 (Psmb8) from Rattus norvegicus (Rat).